The following is a 288-amino-acid chain: Energy-coupling factor transporter ATP-binding protein EcfA2 (288 aa).

Positions 3 to 246 (IKLEQLGYCY…PDELVDLGLS (244 aa)) constitute an ABC transporter domain. 40-47 (GHTGSGKS) contributes to the ATP binding site.

Belongs to the ABC transporter superfamily. Energy-coupling factor EcfA family. In terms of assembly, forms a stable energy-coupling factor (ECF) transporter complex composed of 2 membrane-embedded substrate-binding proteins (S component), 2 ATP-binding proteins (A component) and 2 transmembrane proteins (T component).

The protein localises to the cell membrane. Its function is as follows. ATP-binding (A) component of a common energy-coupling factor (ECF) ABC-transporter complex. Unlike classic ABC transporters this ECF transporter provides the energy necessary to transport a number of different substrates. The sequence is that of Energy-coupling factor transporter ATP-binding protein EcfA2 from Listeria innocua serovar 6a (strain ATCC BAA-680 / CLIP 11262).